A 147-amino-acid chain; its full sequence is Low molecular weight protein-tyrosine-phosphatase Wzb (147 aa).

The Nucleophile role is filled by Cys9. Residue Arg15 is part of the active site. Catalysis depends on Asp115, which acts as the Proton donor.

The protein belongs to the low molecular weight phosphotyrosine protein phosphatase family.

The catalysed reaction is O-phospho-L-tyrosyl-[protein] + H2O = L-tyrosyl-[protein] + phosphate. The protein operates within glycan metabolism; exopolysaccharide biosynthesis. Functionally, dephosphorylates Wzc. Required for the extracellular polysaccharide colanic acid synthesis. Probably involved in the export of colanic acid from the cell to medium. Involved in protection of cells against contact-dependent growth inhibition (CDI). This chain is Low molecular weight protein-tyrosine-phosphatase Wzb (wzb), found in Escherichia coli O157:H7.